The following is a 250-amino-acid chain: Probable transcriptional regulatory protein Paes_0496 (250 aa).

This sequence belongs to the TACO1 family.

It is found in the cytoplasm. The protein is Probable transcriptional regulatory protein Paes_0496 of Prosthecochloris aestuarii (strain DSM 271 / SK 413).